A 242-amino-acid polypeptide reads, in one-letter code: uncharacterized protein (242 aa).

The S-adenosyl-L-methionine site is built by glycine 198, isoleucine 218, and leucine 227.

The protein belongs to the class IV-like SAM-binding methyltransferase superfamily. RNA methyltransferase TrmH family.

This is an uncharacterized protein from Mycoplasma genitalium (strain ATCC 33530 / DSM 19775 / NCTC 10195 / G37) (Mycoplasmoides genitalium).